The following is a 497-amino-acid chain: Zinc metalloproteinase nas-28 (497 aa).

The N-terminal stretch at 1-14 (MFFPVVFFIPFVLG) is a signal peptide. A propeptide spanning residues 15–120 (APTQKALEKI…IENGNYRSKR (106 aa)) is cleaved from the precursor. N76 carries N-linked (GlcNAc...) asparagine glycosylation. The region spanning 121–319 (QAIVDTTNFW…IGVNKLYNCT (199 aa)) is the Peptidase M12A domain. Disulfide bonds link C164–C318, C185–C206, C328–C339, C331–C342, C344–C353, C364–C398, and C427–C447. Zn(2+) is bound at residue H214. E215 is an active-site residue. Zn(2+)-binding residues include H218 and H224. N-linked (GlcNAc...) asparagine glycosylation occurs at N317. Residues 324 to 354 (IQMKCSNCGITDSRNCNQCKCPRYFTGASCD) enclose the EGF-like domain. Residues 364–483 (CNGAVLQATS…LTFSIQYRAV (120 aa)) form the CUB domain. The N-linked (GlcNAc...) asparagine glycan is linked to N394.

It depends on Zn(2+) as a cofactor.

The protein localises to the secreted. Its function is as follows. Metalloprotease. In Caenorhabditis elegans, this protein is Zinc metalloproteinase nas-28 (nas-28).